A 521-amino-acid polypeptide reads, in one-letter code: GMP synthase [glutamine-hydrolyzing] (521 aa).

One can recognise a Glutamine amidotransferase type-1 domain in the interval 5–197; the sequence is KILILDFGSQ…VLDICGAQPG (193 aa). Cys81 acts as the Nucleophile in catalysis. Active-site residues include His171 and Glu173. One can recognise a GMPS ATP-PPase domain in the interval 198–390; sequence WTMPNYIEEA…LGLPREMVYR (193 aa). 225-231 contacts ATP; it reads SGGVDSS.

As to quaternary structure, homodimer.

It carries out the reaction XMP + L-glutamine + ATP + H2O = GMP + L-glutamate + AMP + diphosphate + 2 H(+). It participates in purine metabolism; GMP biosynthesis; GMP from XMP (L-Gln route): step 1/1. Its function is as follows. Catalyzes the synthesis of GMP from XMP. The chain is GMP synthase [glutamine-hydrolyzing] from Neisseria gonorrhoeae (strain ATCC 700825 / FA 1090).